Here is a 92-residue protein sequence, read N- to C-terminus: MTINRWHLLVSGKVQGVYYRASTEQKARELGLTGWVRNLPDGRVEIVAEGEPLQLKALHEWCHEGPERAVVDEVAAQELPATQEFTDFRTTH.

Residues 5–92 enclose the Acylphosphatase-like domain; it reads RWHLLVSGKV…QEFTDFRTTH (88 aa). Residues R20 and N38 contribute to the active site.

It belongs to the acylphosphatase family.

The catalysed reaction is an acyl phosphate + H2O = a carboxylate + phosphate + H(+). This is Acylphosphatase (acyP) from Marinobacter nauticus (strain ATCC 700491 / DSM 11845 / VT8) (Marinobacter aquaeolei).